We begin with the raw amino-acid sequence, 93 residues long: Insertion element ISR1 uncharacterized 11 kDa protein A1 (93 aa).

2 disordered regions span residues 14 to 33 (RRARTTRSARPAEGPGQERR) and 68 to 93 (RRRAPQASDGHAATVTCRWRPTSAGR).

The chain is Insertion element ISR1 uncharacterized 11 kDa protein A1 from Rhizobium sp.